A 535-amino-acid chain; its full sequence is T-complex protein 1 subunit beta (535 aa).

Ala2 is modified (N-acetylalanine). Residue Ser3 is modified to Phosphoserine. Lys13 is subject to N6-acetyllysine. Gly44 is an ADP binding site. Gly44 is an ATP binding site. Position 60 is a phosphoserine (Ser60). Asp97 is a binding site for Mg(2+). Gly98, Thr99, Thr100, and Ser101 together coordinate ADP. Positions 98, 99, and 100 each coordinate ATP. The residue at position 154 (Lys154) is an N6-acetyllysine. The ADP site is built by Ser168 and Ser169. Lys181 is subject to N6-acetyllysine. Lys248 participates in a covalent cross-link: Glycyl lysine isopeptide (Lys-Gly) (interchain with G-Cter in SUMO2). Ser260 carries the post-translational modification Phosphoserine. At Thr261 the chain carries Phosphothreonine. 3 residues coordinate ADP: Gly410, Glu495, and Lys500. Residues Glu495 and Lys500 each coordinate ATP.

Belongs to the TCP-1 chaperonin family. Component of the chaperonin-containing T-complex (TRiC), a hexadecamer composed of two identical back-to-back stacked rings enclosing a protein folding chamber. Each ring is made up of eight different subunits: TCP1/CCT1, CCT2, CCT3, CCT4, CCT5, CCT6A/CCT6, CCT7, CCT8. Interacts with PACRG. Interacts with FLCN. Interacts with DLEC1. Interacts with SVEP1.

It localises to the cytoplasm. The enzyme catalyses ATP + H2O = ADP + phosphate + H(+). Component of the chaperonin-containing T-complex (TRiC), a molecular chaperone complex that assists the folding of actin, tubulin and other proteins upon ATP hydrolysis. The TRiC complex mediates the folding of WRAP53/TCAB1, thereby regulating telomere maintenance. As part of the TRiC complex may play a role in the assembly of BBSome, a complex involved in ciliogenesis regulating transports vesicles to the cilia. The protein is T-complex protein 1 subunit beta (Cct2) of Rattus norvegicus (Rat).